Reading from the N-terminus, the 247-residue chain is GTP cyclohydrolase 1 type 2 homolog (247 aa).

Residues His63, His64, Asp101, His215, and Glu219 each coordinate a divalent metal cation.

This sequence belongs to the GTP cyclohydrolase I type 2/NIF3 family. In terms of assembly, homohexamer.

In Buchnera aphidicola subsp. Baizongia pistaciae (strain Bp), this protein is GTP cyclohydrolase 1 type 2 homolog.